Here is a 139-residue protein sequence, read N- to C-terminus: Orientotoxin-2 (139 aa).

In terms of tissue distribution, expressed by the venom gland.

The protein localises to the secreted. The catalysed reaction is a 1,2-diacyl-sn-glycero-3-phosphocholine + H2O = a 1-acyl-sn-glycero-3-phosphocholine + a fatty acid + H(+). In terms of biological role, has a highly toxic phospholipase A2 activity. The polypeptide is Orientotoxin-2 (Vespa orientalis (Oriental hornet)).